A 556-amino-acid chain; its full sequence is Double-strand-break repair protein rad21-like protein 1 (556 aa).

The protein belongs to the rad21 family. As to quaternary structure, component of some meiotic cohesin complex composed of the SMC1 (SMC1A or SMC1B) and SMC3 heterodimer attached via their hinge domain, RAD21L which link them, and STAG3.

The protein localises to the nucleus. The protein resides in the chromosome. In terms of biological role, meiosis-specific component of some cohesin complex required during the initial steps of prophase I in male meiosis. Probably required during early meiosis in males for separation of sister chromatids and homologous chromosomes. Replaces RAD21 in premeiotic S phase (during early stages of prophase I), while RAD21 reappears in later stages of prophase I. Involved in synaptonemal complex assembly, synapsis initiation and crossover recombination between homologous chromosomes during prophase I. In Homo sapiens (Human), this protein is Double-strand-break repair protein rad21-like protein 1 (RAD21L1).